The chain runs to 176 residues: NAD(P)H-quinone oxidoreductase subunit 6, chloroplastic (176 aa).

5 consecutive transmembrane segments (helical) span residues 10-30, 33-53, 60-80, 95-115, and 152-172; these read ILMLFGGFVLLLGGLGVVLLT, IYSAFSLGLVLVCISLFYFLL, VAQLLIYVGAINVLIIFAVMF, IGDGFTSLVCITIVFSLMTTI, and FYLPFELISIILLVSLIGAIT.

Belongs to the complex I subunit 6 family. NDH is composed of at least 16 different subunits, 5 of which are encoded in the nucleus.

It localises to the plastid. It is found in the chloroplast thylakoid membrane. The enzyme catalyses a plastoquinone + NADH + (n+1) H(+)(in) = a plastoquinol + NAD(+) + n H(+)(out). It catalyses the reaction a plastoquinone + NADPH + (n+1) H(+)(in) = a plastoquinol + NADP(+) + n H(+)(out). NDH shuttles electrons from NAD(P)H:plastoquinone, via FMN and iron-sulfur (Fe-S) centers, to quinones in the photosynthetic chain and possibly in a chloroplast respiratory chain. The immediate electron acceptor for the enzyme in this species is believed to be plastoquinone. Couples the redox reaction to proton translocation, and thus conserves the redox energy in a proton gradient. The chain is NAD(P)H-quinone oxidoreductase subunit 6, chloroplastic (ndhG) from Triticum aestivum (Wheat).